The chain runs to 532 residues: Intercellular adhesion molecule 1 (532 aa).

Positions 1–27 (MAPSSPRPALPALLVLLGALFPGPGNA) are cleaved as a signal peptide. The Extracellular portion of the chain corresponds to 28 to 480 (QTSVSPPKVI…TVNVLSPRYE (453 aa)). 2 Ig-like C2-type domains span residues 41–103 (GGSV…QSTA) and 128–193 (GKDL…LDLR). 3 disulfides stabilise this stretch: Cys48-Cys92, Cys52-Cys96, and Cys135-Cys186. A glycan (N-linked (GlcNAc...) asparagine) is linked at Asn145. Positions 152–154 (RGE) match the Cell attachment site; atypical motif. N-linked (GlcNAc...) asparagine glycosylation is found at Asn183, Asn202, Asn267, and Asn296. Ig-like C2-type domains follow at residues 230-297 (DTQG…LGNQ) and 325-378 (GTEV…LEVA). A disulfide bridge links Cys237 with Cys290. Residues Cys332 and Cys371 are joined by a disulfide bond. N-linked (GlcNAc...) asparagine glycosylation is found at Asn385 and Asn406. 3 disulfide bridges follow: Cys403–Cys419, Cys419–Cys457, and Cys431–Cys457. Positions 412–464 (NSQQTPMCQASGNPLPELKCLKDGTFPLPVGESVTVTRDLEGTYLCRARSTQG) constitute an Ig-like C2-type 5 domain. The helical transmembrane segment at 481–503 (IVIITVVAAAVIMGTAGLSTYLY) threads the bilayer. Topologically, residues 504-532 (NRQRKIRKYRLQQAQKGTPMKPNTQATPP) are cytoplasmic. Thr521 and Thr530 each carry phosphothreonine.

The protein belongs to the immunoglobulin superfamily. ICAM family. As to quaternary structure, homodimer. Interacts with MUC1 and promotes cell aggregation in epithelial cells. Interacts with ARHGEF26/SGEF. Interacts (on T cell side) with CD81, CD247 and CD9 at immunological synapses between antigen-presenting cells and T cells. Post-translationally, monoubiquitinated, which is promoted by MARCH9 and leads to endocytosis.

The protein resides in the membrane. In terms of biological role, ICAM proteins are ligands for the leukocyte adhesion protein LFA-1 (integrin alpha-L/beta-2). During leukocyte trans-endothelial migration, ICAM1 engagement promotes the assembly of endothelial apical cups through ARHGEF26/SGEF and RHOG activation. This Pan troglodytes (Chimpanzee) protein is Intercellular adhesion molecule 1 (ICAM1).